A 276-amino-acid chain; its full sequence is Type II pantothenate kinase (276 aa).

8 to 15 (DAGGTLTK) provides a ligand contact to ATP. Glu76 (proton acceptor) is an active-site residue. ATP-binding positions include Thr105, 127 to 131 (GGTIM), Phe143, and Ser230.

It belongs to the type II pantothenate kinase family. As to quaternary structure, homodimer.

The protein localises to the cytoplasm. The enzyme catalyses (R)-pantothenate + ATP = (R)-4'-phosphopantothenate + ADP + H(+). It functions in the pathway cofactor biosynthesis; coenzyme A biosynthesis; CoA from (R)-pantothenate: step 1/5. Functionally, catalyzes the phosphorylation of pantothenate (Pan), the first step in CoA biosynthesis. This chain is Type II pantothenate kinase, found in Bacillus cereus (strain ATCC 10987 / NRS 248).